The following is a 1241-amino-acid chain: ATP-dependent helicase/nuclease subunit A (1241 aa).

In terms of domain architecture, UvrD-like helicase ATP-binding spans 12–485 (SQWTDDQWKA…IDLAKNFRSR (474 aa)). 33 to 40 (AAAGSGKT) contributes to the ATP binding site. In terms of domain architecture, UvrD-like helicase C-terminal spans 505 to 805 (GEIDYDADAE…RIMTIHKSKG (301 aa)).

This sequence belongs to the helicase family. AddA subfamily. In terms of assembly, heterodimer of AddA and AddB/RexB. Requires Mg(2+) as cofactor.

The enzyme catalyses Couples ATP hydrolysis with the unwinding of duplex DNA by translocating in the 3'-5' direction.. It catalyses the reaction ATP + H2O = ADP + phosphate + H(+). In terms of biological role, the heterodimer acts as both an ATP-dependent DNA helicase and an ATP-dependent, dual-direction single-stranded exonuclease. Recognizes the chi site generating a DNA molecule suitable for the initiation of homologous recombination. The AddA nuclease domain is required for chi fragment generation; this subunit has the helicase and 3' -&gt; 5' nuclease activities. The chain is ATP-dependent helicase/nuclease subunit A from Bacillus cereus (strain ZK / E33L).